Reading from the N-terminus, the 328-residue chain is Arylacetonitrilase (328 aa).

Residues 5-278 form the CN hydrolase domain; the sequence is VRVAVTQAEP…EGIIYADLDF (274 aa). The active-site Proton acceptor is the Glu45. Residue Lys125 is part of the active site. The active-site Nucleophile is Cys160.

This sequence belongs to the carbon-nitrogen hydrolase superfamily. Nitrilase family.

It carries out the reaction a nitrile + 2 H2O = a carboxylate + NH4(+). It catalyses the reaction 4-chlorophenylacetonitrile + 2 H2O = 4-chlorophenylacetate + NH4(+). Nitrilase that hydrolyzes preferentially phenylacetonitrile, (R,S)-mandelonitrile, and 3-indolylacetonitrile. The protein is Arylacetonitrilase of Aspergillus niger (strain ATCC MYA-4892 / CBS 513.88 / FGSC A1513).